Reading from the N-terminus, the 135-residue chain is 6,7-dimethyl-8-ribityllumazine synthase (135 aa).

Residues Phe-12, 44 to 46, and 68 to 70 contribute to the 5-amino-6-(D-ribitylamino)uracil site; these read AYD and CVI. Residue 73–74 participates in (2S)-2-hydroxy-3-oxobutyl phosphate binding; that stretch reads AT. The Proton donor role is filled by His-76. Leu-101 is a 5-amino-6-(D-ribitylamino)uracil binding site. Arg-116 is a (2S)-2-hydroxy-3-oxobutyl phosphate binding site.

The protein belongs to the DMRL synthase family.

The enzyme catalyses (2S)-2-hydroxy-3-oxobutyl phosphate + 5-amino-6-(D-ribitylamino)uracil = 6,7-dimethyl-8-(1-D-ribityl)lumazine + phosphate + 2 H2O + H(+). Its pathway is cofactor biosynthesis; riboflavin biosynthesis; riboflavin from 2-hydroxy-3-oxobutyl phosphate and 5-amino-6-(D-ribitylamino)uracil: step 1/2. Its function is as follows. Catalyzes the formation of 6,7-dimethyl-8-ribityllumazine by condensation of 5-amino-6-(D-ribitylamino)uracil with 3,4-dihydroxy-2-butanone 4-phosphate. This is the penultimate step in the biosynthesis of riboflavin. The protein is 6,7-dimethyl-8-ribityllumazine synthase of Methanoculleus marisnigri (strain ATCC 35101 / DSM 1498 / JR1).